The chain runs to 286 residues: DegV domain-containing protein M6_Spy1658 (286 aa).

Residues 3-282 (FTIMTDSTAD…PNTLAVFVIG (280 aa)) enclose the DegV domain. Positions 62 and 94 each coordinate hexadecanoate.

In terms of biological role, may bind long-chain fatty acids, such as palmitate, and may play a role in lipid transport or fatty acid metabolism. The polypeptide is DegV domain-containing protein M6_Spy1658 (Streptococcus pyogenes serotype M6 (strain ATCC BAA-946 / MGAS10394)).